The sequence spans 334 residues: Holliday junction branch migration complex subunit RuvB (334 aa).

The interval 1-182 (MDDRMIDGEL…FGVLSRLEYY (182 aa)) is large ATPase domain (RuvB-L). ATP is bound by residues L21, R22, G63, K66, T67, T68, 129–131 (EDF), R172, Y182, and R219. T67 is a binding site for Mg(2+). Residues 183–253 (EIKDLCNIVE…STKQALEMLQ (71 aa)) form a small ATPAse domain (RuvB-S) region. The tract at residues 256–334 (DAGLDHVDHK…HLGIKRTGED (79 aa)) is head domain (RuvB-H). DNA is bound by residues R311 and R316.

Belongs to the RuvB family. Homohexamer. Forms an RuvA(8)-RuvB(12)-Holliday junction (HJ) complex. HJ DNA is sandwiched between 2 RuvA tetramers; dsDNA enters through RuvA and exits via RuvB. An RuvB hexamer assembles on each DNA strand where it exits the tetramer. Each RuvB hexamer is contacted by two RuvA subunits (via domain III) on 2 adjacent RuvB subunits; this complex drives branch migration. In the full resolvosome a probable DNA-RuvA(4)-RuvB(12)-RuvC(2) complex forms which resolves the HJ.

Its subcellular location is the cytoplasm. It carries out the reaction ATP + H2O = ADP + phosphate + H(+). Its function is as follows. The RuvA-RuvB-RuvC complex processes Holliday junction (HJ) DNA during genetic recombination and DNA repair, while the RuvA-RuvB complex plays an important role in the rescue of blocked DNA replication forks via replication fork reversal (RFR). RuvA specifically binds to HJ cruciform DNA, conferring on it an open structure. The RuvB hexamer acts as an ATP-dependent pump, pulling dsDNA into and through the RuvAB complex. RuvB forms 2 homohexamers on either side of HJ DNA bound by 1 or 2 RuvA tetramers; 4 subunits per hexamer contact DNA at a time. Coordinated motions by a converter formed by DNA-disengaged RuvB subunits stimulates ATP hydrolysis and nucleotide exchange. Immobilization of the converter enables RuvB to convert the ATP-contained energy into a lever motion, pulling 2 nucleotides of DNA out of the RuvA tetramer per ATP hydrolyzed, thus driving DNA branch migration. The RuvB motors rotate together with the DNA substrate, which together with the progressing nucleotide cycle form the mechanistic basis for DNA recombination by continuous HJ branch migration. Branch migration allows RuvC to scan DNA until it finds its consensus sequence, where it cleaves and resolves cruciform DNA. The chain is Holliday junction branch migration complex subunit RuvB from Oceanobacillus iheyensis (strain DSM 14371 / CIP 107618 / JCM 11309 / KCTC 3954 / HTE831).